The following is a 131-amino-acid chain: Antitoxin MqsA (131 aa).

Positions 3, 6, 37, and 40 each coordinate Zn(2+). Positions 74 to 127 (IVKVRKKLSLTQKEASEIFGGGVNAFSRYEKGNAQPHPSTIKLLRVLDKHPELL) constitute an HTH cro/C1-type domain. The segment at residues 85 to 104 (QKEASEIFGGGVNAFSRYEK) is a DNA-binding region (H-T-H motif).

As to quaternary structure, homodimer. Crystallizes as a heterotetramer with MqsA, MqsR-MqsA(2)-MqsR. Purifies as a probable heterohexamer of 2 MqsR dimers and 1 MqsA dimer. Binds promoter DNA as a dimer. When the 2 dissociate the MsqR mRNA interferase becomes active. It depends on Zn(2+) as a cofactor. Degraded in the presence of oxidative stress, maybe by the Lon and/or ClpX proteases.

Antitoxin component of a type II toxin-antitoxin (TA) system. Labile antitoxin that binds to the MqsR mRNA interferase toxin and neutralizes its endoribonuclease activity. Overexpression prevents MqsR-mediated cessation of cell growth and inhibition of cell proliferation. Initially reported to act as a cotranscription factor with MqsA. Following further experiments, the MqsR-MqsA complex does not bind DNA and all reported data are actually due to a small fraction of free MqsA alone binding DNA. Addition of MqsR to a preformed MqsA-promoter DNA complex causes dissociation of the MqsA-DNA complex, probably causing derepression of MqsA-repressed transcripts. MqsA binds to 2 palindromes in the promoter region of the mqsRA operon activating its transcription. Binds to other promoters, inducing mcbR and spy and repressing cspD among others. Binds to and represses the rpoS promoter, the master stress regulator, resulting in decreased cyclic-di-GMP, reduced stress resistance, increased cell motility and decreased biofilm formation; in these experiments 5 TA systems are missing (lacks MazEF, RelEB, ChpB, YoeB-YefM, YafQ-DinJ). An earlier study showed overexpression alone increases biofilm formation, perhaps by repressing cspD; in these experiments the 5 TA systems are present. Represses the csgD promoter. In the presence of stress, when this protein is degraded, the promoters it represses are derepressed, leading to biofilm formation. This TA system mediates cell growth during bile acid deoxycholate stress by degrading mRNA for probable deoxycholate-binding protein YgiS; bile acid detergents such as deoxycholate are important for host defense against bacterial growth in the gall bladder and duodenum. This chain is Antitoxin MqsA, found in Escherichia coli (strain K12).